Reading from the N-terminus, the 80-residue chain is Lantibiotic Flvalpha.c (80 aa).

Residues 1-38 (MNKNPIYRSEEEAKNIACGNVAAELDENSQALDAINGA) constitute a propeptide, cleaved by FlvT. 2,3-didehydrobutyrine; by FlvM1 is present on residues threonine 43 and threonine 47. Positions 52 to 55 (TLGC) form a cross-link, beta-methyllanthionine (Thr-Cys); by FlvM1. Positions 58 to 68 (SYGLGNGGYCC) form a cross-link, lanthionine (Ser-Cys); by FlvM1. 2 consecutive cross-links (beta-methyllanthionine (Thr-Cys); by FlvM1) follow at residues 69–74 (TYTVEC) and 71–78 (TVECSKTC).

Post-translationally, the lanthionine formed by Ser-58 and Cys-68 forms a putative lipid II binding motif. Maturation of FlvA1 peptides involves the enzymatic conversion of Thr, and Ser into dehydrated AA and the formation of thioether bonds with cysteines. Modifications are processed by the flavecin synthetase FlvM1. This is followed by membrane translocation and cleavage of the modified precursor. In terms of processing, contains DL-lanthionine and DL-beta-methyllanthionine, when coepressed in E.coli with the flavecin synthetase FlvM1.

It is found in the secreted. Its function is as follows. Lanthionine-containing peptide antibiotic (lantibiotic) only active on Gram-positive bacteria in synergy with Flvbeta peptides, which are encoded by the same operon than Flvalpha.a. Shows antibacterial activity in synergy with Flvbeta.b, Flvbeta.c, Flvbeta.e and Flvbeta.g. Does not show antibacterial activity when tested with Flvbeta.a, Flvbeta.d, Flvbeta.f and Flvbeta.h. The bactericidal activity of lantibiotics is based on depolarization of energized bacterial cytoplasmic membranes, initiated by the formation of aqueous transmembrane pores. This is Lantibiotic Flvalpha.c from Ruminococcus flavefaciens.